We begin with the raw amino-acid sequence, 206 residues long: Small ribosomal subunit protein uS4 (206 aa).

The 61-residue stretch at 96-156 (CRLDNVVYRM…EKSLGQLRIV (61 aa)) folds into the S4 RNA-binding domain.

It belongs to the universal ribosomal protein uS4 family. In terms of assembly, part of the 30S ribosomal subunit. Contacts protein S5. The interaction surface between S4 and S5 is involved in control of translational fidelity.

In terms of biological role, one of the primary rRNA binding proteins, it binds directly to 16S rRNA where it nucleates assembly of the body of the 30S subunit. With S5 and S12 plays an important role in translational accuracy. This is Small ribosomal subunit protein uS4 from Pseudomonas putida (strain ATCC 47054 / DSM 6125 / CFBP 8728 / NCIMB 11950 / KT2440).